Here is a 301-residue protein sequence, read N- to C-terminus: uncharacterized protein (301 aa).

This is an uncharacterized protein from Sinorhizobium fredii (strain NBRC 101917 / NGR234).